We begin with the raw amino-acid sequence, 60 residues long: Large ribosomal subunit protein uL30 (60 aa).

It belongs to the universal ribosomal protein uL30 family. As to quaternary structure, part of the 50S ribosomal subunit.

This is Large ribosomal subunit protein uL30 from Paraburkholderia phytofirmans (strain DSM 17436 / LMG 22146 / PsJN) (Burkholderia phytofirmans).